Reading from the N-terminus, the 365-residue chain is tRNA N6-adenosine threonylcarbamoyltransferase (365 aa).

Fe cation is bound by residues His119 and His123. Residues 141-145 (LVSGG), Asp174, Gly187, and Asn288 contribute to the substrate site. Asp316 contacts Fe cation.

The protein belongs to the KAE1 / TsaD family. Fe(2+) serves as cofactor.

The protein localises to the cytoplasm. The catalysed reaction is L-threonylcarbamoyladenylate + adenosine(37) in tRNA = N(6)-L-threonylcarbamoyladenosine(37) in tRNA + AMP + H(+). Its function is as follows. Required for the formation of a threonylcarbamoyl group on adenosine at position 37 (t(6)A37) in tRNAs that read codons beginning with adenine. Is involved in the transfer of the threonylcarbamoyl moiety of threonylcarbamoyl-AMP (TC-AMP) to the N6 group of A37, together with TsaE and TsaB. TsaD likely plays a direct catalytic role in this reaction. The chain is tRNA N6-adenosine threonylcarbamoyltransferase from Rhizobium etli (strain ATCC 51251 / DSM 11541 / JCM 21823 / NBRC 15573 / CFN 42).